A 350-amino-acid polypeptide reads, in one-letter code: GTPase Obg (350 aa).

The region spanning 1-175 (MFVDNIRIFA…GVFFMELRRI (175 aa)) is the Obg domain. The OBG-type G domain maps to 176–345 (ADAGLVGYPN…LRNRLDELVG (170 aa)). GTP is bound by residues 182-189 (GYPNAGKS), 207-211 (FTTLQ), 229-232 (DIPG), 299-302 (NKMD), and 326-328 (SAL). Mg(2+) contacts are provided by Ser189 and Thr209.

The protein belongs to the TRAFAC class OBG-HflX-like GTPase superfamily. OBG GTPase family. Monomer. Mg(2+) serves as cofactor.

It is found in the cytoplasm. An essential GTPase which binds GTP, GDP and possibly (p)ppGpp with moderate affinity, with high nucleotide exchange rates and a fairly low GTP hydrolysis rate. Plays a role in control of the cell cycle, stress response, ribosome biogenesis and in those bacteria that undergo differentiation, in morphogenesis control. This Akkermansia muciniphila (strain ATCC BAA-835 / DSM 22959 / JCM 33894 / BCRC 81048 / CCUG 64013 / CIP 107961 / Muc) protein is GTPase Obg.